The chain runs to 1343 residues: DNA-directed RNA polymerase subunit beta (1343 aa).

It belongs to the RNA polymerase beta chain family. As to quaternary structure, the RNAP catalytic core consists of 2 alpha, 1 beta, 1 beta' and 1 omega subunit. When a sigma factor is associated with the core the holoenzyme is formed, which can initiate transcription.

It carries out the reaction RNA(n) + a ribonucleoside 5'-triphosphate = RNA(n+1) + diphosphate. In terms of biological role, DNA-dependent RNA polymerase catalyzes the transcription of DNA into RNA using the four ribonucleoside triphosphates as substrates. In Buchnera aphidicola subsp. Cinara cedri (strain Cc), this protein is DNA-directed RNA polymerase subunit beta.